Reading from the N-terminus, the 145-residue chain is Large ribosomal subunit protein uL16 (145 aa).

The segment covering 1–21 has biased composition (basic residues); that stretch reads MLVPTRVKHRKQHRGRMHGKA. A disordered region spans residues 1–22; the sequence is MLVPTRVKHRKQHRGRMHGKAT.

This sequence belongs to the universal ribosomal protein uL16 family. Part of the 50S ribosomal subunit.

In terms of biological role, binds 23S rRNA and is also seen to make contacts with the A and possibly P site tRNAs. This Desulfitobacterium hafniense (strain Y51) protein is Large ribosomal subunit protein uL16.